A 313-amino-acid chain; its full sequence is Ubiquinone biosynthesis protein COQ4, mitochondrial (313 aa).

Zn(2+)-binding residues include H197, D198, H201, and E213. The tract at residues 290–313 (QPPDLRELRRKQKKLPEPERENAN) is disordered. Positions 303 to 313 (KLPEPERENAN) are enriched in basic and acidic residues.

Belongs to the COQ4 family. In terms of assembly, component of a multi-subunit COQ enzyme complex, composed of at least COQ3, COQ4, COQ5, COQ6, COQ7 and COQ9. It depends on Zn(2+) as a cofactor.

Its subcellular location is the mitochondrion inner membrane. It catalyses the reaction a 4-hydroxy-3-methoxy-5-(all-trans-polyprenyl)benzoate + H(+) = a 2-methoxy-6-(all-trans-polyprenyl)phenol + CO2. The protein operates within cofactor biosynthesis; ubiquinone biosynthesis. Functionally, lyase that catalyzes the C1-decarboxylation of 4-hydroxy-3-methoxy-5-(all-trans-polyprenyl)benzoic acid into 2-methoxy-6-(all-trans-polyprenyl)phenol during ubiquinone biosynthesis. This is Ubiquinone biosynthesis protein COQ4, mitochondrial from Meyerozyma guilliermondii (strain ATCC 6260 / CBS 566 / DSM 6381 / JCM 1539 / NBRC 10279 / NRRL Y-324) (Yeast).